The sequence spans 211 residues: CASP-like protein 3A1 (211 aa).

Residues 1–45 (MGSIGNGRSDSVVGIQMPPAGSKMVLEPEALQVTTSPVPRWPRLG) lie on the Cytoplasmic side of the membrane. A helical membrane pass occupies residues 46–66 (VVMVATRAVAMVMALLSMSLM). Residues 67 to 95 (VSSKQRGILTIFGIEIPLDANWSFSYSLQ) are Extracellular-facing. Asn87 carries N-linked (GlcNAc...) asparagine glycosylation. Residues 96–116 (FLVAMSTASAAYSLAQLLLIA) traverse the membrane as a helical segment. The Cytoplasmic segment spans residues 117–131 (HKAVKKSPIVPSRRH). A helical transmembrane segment spans residues 132 to 152 (AWLLFAGDQVFSLAMMSAGSA). Residues 153 to 186 (AAAVANLNRTGIRHTALPNFCKPLPRFCDLSAVS) lie on the Extracellular side of the membrane. Asn160 is a glycosylation site (N-linked (GlcNAc...) asparagine). The chain crosses the membrane as a helical span at residues 187 to 207 (IACAFLSCVFLAASAVIDVIW). Residues 208–211 (LSSP) are Cytoplasmic-facing.

This sequence belongs to the Casparian strip membrane proteins (CASP) family. In terms of assembly, homodimer and heterodimers.

It localises to the cell membrane. In Sorghum bicolor (Sorghum), this protein is CASP-like protein 3A1.